The primary structure comprises 146 residues: Large ribosomal subunit protein uL15 (146 aa).

A compositionally biased stretch (basic and acidic residues) spans 1–13 (MKLHELKPAEGSR). A disordered region spans residues 1-60 (MKLHELKPAEGSRKQRNRVGRGIGSGNGKTAGKGHKGQNARSGGGVRPGFEGGQNPLFRR). Composition is skewed to gly residues over residues 21-31 (RGIGSGNGKTA) and 42-52 (SGGGVRPGFEG).

Belongs to the universal ribosomal protein uL15 family. In terms of assembly, part of the 50S ribosomal subunit.

In terms of biological role, binds to the 23S rRNA. The polypeptide is Large ribosomal subunit protein uL15 (Lysinibacillus sphaericus (strain C3-41)).